The chain runs to 1103 residues: Mediator of RNA polymerase II transcription subunit 14 (1103 aa).

Disordered regions lie at residues 1–63 (MPGV…GYKQ), 120–140 (VPPQDSGPLPGAPNGKPLGNQ), and 1054–1103 (LETK…ITID). Over residues 1073–1103 (SGNTVQNARLENKSPQKAAATHSNADVITID) the composition is skewed to polar residues.

This sequence belongs to the Mediator complex subunit 14 family. As to quaternary structure, component of the Mediator complex.

The protein resides in the nucleus. Component of the Mediator complex, a coactivator involved in the regulated transcription of nearly all RNA polymerase II-dependent genes. Mediator functions as a bridge to convey information from gene-specific regulatory proteins to the basal RNA polymerase II transcription machinery. Mediator is recruited to promoters by direct interactions with regulatory proteins and serves as a scaffold for the assembly of a functional preinitiation complex with RNA polymerase II and the general transcription factors. In Aspergillus terreus (strain NIH 2624 / FGSC A1156), this protein is Mediator of RNA polymerase II transcription subunit 14 (rgr1).